We begin with the raw amino-acid sequence, 188 residues long: Glutamyl endopeptidase 2 (188 aa).

The cysteines at positions 14 and 34 are disulfide-linked. Active-site charge relay system residues include histidine 33, aspartate 62, and serine 143. The cysteines at positions 137 and 163 are disulfide-linked.

Belongs to the peptidase S1 family. In terms of assembly, monomer.

It catalyses the reaction Preferential cleavage: -Glu-|-Xaa- &gt;&gt; -Asp-|-Xaa-. Preference for Pro or Leu at P2 and Phe at P3. Cleavage of -Glu-|-Asp- and -Glu-|-Pro- bonds is slow.. In terms of biological role, preferentially cleaves peptide bonds on the carboxyl-terminal side of glutamate. The chain is Glutamyl endopeptidase 2 (sprE) from Streptomyces griseus.